The primary structure comprises 107 residues: Pyrimidine/purine nucleoside phosphorylase (107 aa).

This sequence belongs to the nucleoside phosphorylase PpnP family.

It catalyses the reaction a purine D-ribonucleoside + phosphate = a purine nucleobase + alpha-D-ribose 1-phosphate. It carries out the reaction adenosine + phosphate = alpha-D-ribose 1-phosphate + adenine. The catalysed reaction is cytidine + phosphate = cytosine + alpha-D-ribose 1-phosphate. The enzyme catalyses guanosine + phosphate = alpha-D-ribose 1-phosphate + guanine. It catalyses the reaction inosine + phosphate = alpha-D-ribose 1-phosphate + hypoxanthine. It carries out the reaction thymidine + phosphate = 2-deoxy-alpha-D-ribose 1-phosphate + thymine. The catalysed reaction is uridine + phosphate = alpha-D-ribose 1-phosphate + uracil. The enzyme catalyses xanthosine + phosphate = alpha-D-ribose 1-phosphate + xanthine. Catalyzes the phosphorolysis of diverse nucleosides, yielding D-ribose 1-phosphate and the respective free bases. Can use uridine, adenosine, guanosine, cytidine, thymidine, inosine and xanthosine as substrates. Also catalyzes the reverse reactions. The protein is Pyrimidine/purine nucleoside phosphorylase of Aromatoleum aromaticum (strain DSM 19018 / LMG 30748 / EbN1) (Azoarcus sp. (strain EbN1)).